Here is a 295-residue protein sequence, read N- to C-terminus: Glycine--tRNA ligase alpha subunit (295 aa).

This sequence belongs to the class-II aminoacyl-tRNA synthetase family. Tetramer of two alpha and two beta subunits.

It is found in the cytoplasm. It carries out the reaction tRNA(Gly) + glycine + ATP = glycyl-tRNA(Gly) + AMP + diphosphate. This chain is Glycine--tRNA ligase alpha subunit, found in Thermosynechococcus vestitus (strain NIES-2133 / IAM M-273 / BP-1).